The primary structure comprises 452 residues: Packaging protein 1 (452 aa).

Positions 1–78 are disordered; that stretch reads MLPCRSTGRR…AKPPQRGSLL (78 aa). 173–180 lines the ATP pocket; sequence GPTGCGKS. Residues 442-452 are DNA-binding; sequence RAYHVRKNKYQ.

This sequence belongs to the adenoviridae packaging protein 1 family. Homodimer. Part of a genome packaging complex composed of packaging proteins 1, 2 and 3; this complex specifically binds to the packaging sequence on the left end of viral genomic DNA and performs packaging of the viral genome. Interacts with protein 33K.

Its subcellular location is the virion. It localises to the host nucleus. The protein localises to the host nucleoplasm. The protein resides in the host nucleolus. In terms of biological role, component of the packaging machinery which encapsidates the viral DNA into preformed capsids and transcriptional activator of the viral major late promoter (MLP). Binds, along with packaging proteins 2 and 3, to the specific packaging sequence on the left end of viral genomic DNA and displays ATPase activity thereby providing the power stroke of the packaging machinery. The activity of packaging protein IVa2 is stimulated by protein 33K which acts as a terminase. May be the protein that pumps DNA into the capsid powered by ATP hydrolysis. Specifically binds to the 5'-CG-3' nucleotides of the repeats making up the packaging sequence. Component of the DEF-A and DEF-B transcription factors that bind downstream elements of the major late promoter (MLP), and stimulate transcription from the MLP after initiation of viral DNA replication. DEF-A is a heterodimer packaging proteins 1 and 2 and DEF-B is a homodimer of packaging protein 1. This chain is Packaging protein 1, found in Homo sapiens (Human).